Consider the following 846-residue polypeptide: Enhancer of polycomb-like protein 1 (846 aa).

5 disordered regions span residues 169–204 (FNSKAEGSSGDVKSDKEQGRGMRVKGKDREKEKGDA), 391–466 (TSDE…APDA), 587–609 (EKKRPRSIDEVEEEMQEQSPKAM), 682–702 (AADAKPPPAPIFQKPPAPQPN), and 759–804 (QVQA…GVKQ). Basic and acidic residues predominate over residues 180–203 (VKSDKEQGRGMRVKGKDREKEKGD). Residues 411 to 426 (PSLSGQTPLTSGQSSS) show a composition bias toward polar residues. Positions 432–452 (TDKDREERAQRERYDAQRNAE) are enriched in basic and acidic residues. Positions 434-490 (KDREERAQRERYDAQRNAERSGILSGRSNAPDALKERLQALQQKTEEMLARKKEQDA) form a coiled coil. Positions 686 to 702 (KPPPAPIFQKPPAPQPN) are enriched in pro residues. Low complexity predominate over residues 759–773 (QVQAQGQGHPQAHLQ). Residues 774 to 796 (THPQGVSQPNGVNSPMPNGQQML) are compositionally biased toward polar residues.

The protein belongs to the enhancer of polycomb family. In terms of assembly, component of the NuA4 histone acetyltransferase complex.

It localises to the nucleus. Component of the NuA4 histone acetyltransferase complex which is involved in transcriptional activation of selected genes principally by acetylation of nucleosomal histone H4 and H2A. The NuA4 complex is also involved in DNA repair. Involved in gene silencing by neighboring heterochromatin, blockage of the silencing spreading along the chromosome, and required for cell cycle progression through G2/M. This is Enhancer of polycomb-like protein 1 (EPL1) from Cryptococcus neoformans var. neoformans serotype D (strain B-3501A) (Filobasidiella neoformans).